Here is a 179-residue protein sequence, read N- to C-terminus: ATP synthase subunit delta, chloroplastic (179 aa).

It belongs to the ATPase delta chain family. As to quaternary structure, F-type ATPases have 2 components, F(1) - the catalytic core - and F(0) - the membrane proton channel. F(1) has five subunits: alpha(3), beta(3), gamma(1), delta(1), epsilon(1). CF(0) has four main subunits: a(1), b(1), b'(1) and c(10-14). The alpha and beta chains form an alternating ring which encloses part of the gamma chain. F(1) is attached to F(0) by a central stalk formed by the gamma and epsilon chains, while a peripheral stalk is formed by the delta, b and b' chains.

Its subcellular location is the plastid. It localises to the chloroplast thylakoid membrane. In terms of biological role, f(1)F(0) ATP synthase produces ATP from ADP in the presence of a proton or sodium gradient. F-type ATPases consist of two structural domains, F(1) containing the extramembraneous catalytic core and F(0) containing the membrane proton channel, linked together by a central stalk and a peripheral stalk. During catalysis, ATP synthesis in the catalytic domain of F(1) is coupled via a rotary mechanism of the central stalk subunits to proton translocation. Its function is as follows. This protein is part of the stalk that links CF(0) to CF(1). It either transmits conformational changes from CF(0) to CF(1) or is implicated in proton conduction. The polypeptide is ATP synthase subunit delta, chloroplastic (Ochrosphaera neapolitana).